Consider the following 1755-residue polypeptide: Deleted in lung and esophageal cancer protein 1 (1755 aa).

The segment covering 1–12 (METRSSKTRRSL) has biased composition (basic residues). Disordered stretches follow at residues 1–39 (METR…PSQP), 1339–1360 (PGPS…GSSS), and 1529–1553 (SQDG…EETA). Residues 30–39 (PAGSSSPSQP) show a composition bias toward low complexity.

As to quaternary structure, interacts with alpha- and beta-tubulin. Interacts with BBS2, BBS4, BBS5, MKKS, TCP1, CCT2, CCT3, CCT4, CCT5 and CCT7. Expressed in all tissues examined. Expression is highest in prostate and testis.

The protein localises to the cytoplasm. Functionally, essential for spermatogenesis and male fertility. May play an important role in sperm head and tail formation. May act as a tumor suppressor by inhibiting cell proliferation. This is Deleted in lung and esophageal cancer protein 1 from Homo sapiens (Human).